Reading from the N-terminus, the 553-residue chain is Undecaprenyl phosphate-alpha-4-amino-4-deoxy-L-arabinose arabinosyl transferase (553 aa).

11 consecutive transmembrane segments (helical) span residues 6-26 (ACKV…LLPL), 89-109 (FGSV…AMMM), 115-135 (IAFA…IGTY), 180-200 (FMTK…PIVI), 208-228 (IVCF…PWVI), 258-278 (IAPF…WLGL), 293-313 (NPEM…FSIA), 317-337 (LPTY…KFGV), 352-372 (GMVN…MEVV), 386-406 (WVLA…CFAL), and 410-430 (YWLL…HALP).

This sequence belongs to the glycosyltransferase 83 family.

It localises to the cell inner membrane. The enzyme catalyses 4-amino-4-deoxy-alpha-L-arabinopyranosyl di-trans,octa-cis-undecaprenyl phosphate + lipid IVA = lipid IIA + di-trans,octa-cis-undecaprenyl phosphate.. Its pathway is lipopolysaccharide metabolism; 4-amino-4-deoxy-beta-L-arabinose-lipid A biosynthesis. Functionally, catalyzes the transfer of the L-Ara4N moiety of the glycolipid undecaprenyl phosphate-alpha-L-Ara4N to lipid A. The modified arabinose is attached to lipid A and is required for resistance to polymyxin and cationic antimicrobial peptides. The chain is Undecaprenyl phosphate-alpha-4-amino-4-deoxy-L-arabinose arabinosyl transferase (arnT) from Photorhabdus laumondii subsp. laumondii (strain DSM 15139 / CIP 105565 / TT01) (Photorhabdus luminescens subsp. laumondii).